Reading from the N-terminus, the 359-residue chain is Peptide chain release factor 1 (359 aa).

Q236 carries the N5-methylglutamine modification.

Belongs to the prokaryotic/mitochondrial release factor family. Methylated by PrmC. Methylation increases the termination efficiency of RF1.

The protein resides in the cytoplasm. Peptide chain release factor 1 directs the termination of translation in response to the peptide chain termination codons UAG and UAA. The protein is Peptide chain release factor 1 of Streptococcus pneumoniae serotype 2 (strain D39 / NCTC 7466).